A 207-amino-acid chain; its full sequence is Large ribosomal subunit protein uL4 (207 aa).

Belongs to the universal ribosomal protein uL4 family. In terms of assembly, part of the 50S ribosomal subunit.

In terms of biological role, one of the primary rRNA binding proteins, this protein initially binds near the 5'-end of the 23S rRNA. It is important during the early stages of 50S assembly. It makes multiple contacts with different domains of the 23S rRNA in the assembled 50S subunit and ribosome. Functionally, forms part of the polypeptide exit tunnel. The chain is Large ribosomal subunit protein uL4 from Rickettsia africae (strain ESF-5).